The following is an 810-amino-acid chain: Hemoglobin-haptoglobin utilization protein B (810 aa).

The first 22 residues, Met1 to Ala22, serve as a signal peptide directing secretion. The 133-residue stretch at Asn34–Lys166 folds into the TBDR plug domain. Residues Asp175 to Phe810 enclose the TBDR beta-barrel domain. The TonB C-terminal box motif lies at Gln793 to Phe810.

It belongs to the TonB-dependent receptor family.

Its subcellular location is the cell outer membrane. In terms of biological role, acts as a receptor for hemoglobin or the hemoglobin/haptoglobin complex and is required for heme uptake. The polypeptide is Hemoglobin-haptoglobin utilization protein B (hpuB) (Neisseria meningitidis serogroup A / serotype 4A (strain DSM 15465 / Z2491)).